The chain runs to 172 residues: Type VI secretion system sheath protein TssB1 (172 aa).

In terms of assembly, forms a heterodimer with TssC1. Heterodimers assemble to form the sheath of the T6SS machinery. Interacts with TagJ. Interacts with TssA1.

In terms of biological role, core component of the H1 type VI (H1-T6SS) secretion system that plays a role in the release of toxins targeting both eukaryotic and prokaryotic species. Forms the sheath of the structure by assembling into tubules together with TssC1 resulting in the stacking of cogwheel-like structures showing predominantly a 12-fold symmetry. The sheath contracts to provide the energy needed for effector delivery. The protein is Type VI secretion system sheath protein TssB1 of Pseudomonas aeruginosa (strain ATCC 15692 / DSM 22644 / CIP 104116 / JCM 14847 / LMG 12228 / 1C / PRS 101 / PAO1).